The following is a 240-amino-acid chain: Phosducin-like protein 3 (240 aa).

At methionine 1 the chain carries N-acetylmethionine. One can recognise a Phosducin domain in the interval 27-181; that stretch reads KELEEEEAEK…EGDIKAQFIG (155 aa). A phosphoserine mark is found at serine 44, serine 65, serine 235, and serine 237. A thioredoxin fold region spans residues 92–240; sequence FGEVLEISGK…MRRDSDSEDD (149 aa).

Belongs to the phosducin family. In terms of assembly, interacts (via thioredoxin fold region) with KDR/VEGFR2 (via juxtamembrane domain). Forms ternary complexes with the chaperonin CCT complex and actin substrate, leading to inhibition of actin folding. Interacts with XIAP (via BIR 3 and RING domain). Interacts with HSP90AA1 and HSP90AB1. N-terminal methionine acetylation destabilizes the protein. Expressed in blood vessels (at protein level).

The protein localises to the cytoplasm. Its subcellular location is the perinuclear region. The protein resides in the endoplasmic reticulum. In terms of biological role, acts as a chaperone for the angiogenic VEGF receptor KDR/VEGFR2, increasing its abundance by inhibiting its ubiquitination and degradation. Inhibits the folding activity of the chaperonin-containing T-complex (CCT) which leads to inhibition of cytoskeletal actin folding. Acts as a chaperone during heat shock alongside HSP90 and HSP40/70 chaperone complexes. Modulates the activation of caspases during apoptosis. The protein is Phosducin-like protein 3 (Pdcl3) of Mus musculus (Mouse).